A 145-amino-acid polypeptide reads, in one-letter code: Large ribosomal subunit protein uL15 (145 aa).

A disordered region spans residues 1–52; it reads MFNLLKPKGASKRRKIVGRGPGSGLGKTSGRGQKGQKARNTSPRLGFEGGQT. Gly residues predominate over residues 19–33; sequence RGPGSGLGKTSGRGQ.

It belongs to the universal ribosomal protein uL15 family. In terms of assembly, part of the 50S ribosomal subunit.

In terms of biological role, binds to the 23S rRNA. The sequence is that of Large ribosomal subunit protein uL15 from Borreliella burgdorferi (strain ATCC 35210 / DSM 4680 / CIP 102532 / B31) (Borrelia burgdorferi).